We begin with the raw amino-acid sequence, 1040 residues long: Multidrug resistance protein MdtB (1040 aa).

12 helical membrane-spanning segments follow: residues 16–36, 347–367, 369–389, 396–416, 440–460, 472–492, 537–557, 863–883, 888–908, 911–931, 968–988, and 998–1018; these read FIMR…AGII, LMMA…NIPA, IIPG…MVFL, LTLM…IVVI, IGFT…PLLF, FAIT…TLTP, WLTL…WVFI, LGST…VLGI, FIHP…ALLA, IAGS…IGIV, ILMT…STGV, and IGMV…TPVI.

This sequence belongs to the resistance-nodulation-cell division (RND) (TC 2.A.6) family. MdtB subfamily. In terms of assembly, part of a tripartite efflux system composed of MdtA, MdtB and MdtC. MdtB forms a heteromultimer with MdtC.

It localises to the cell inner membrane. Its function is as follows. The MdtABC tripartite complex confers resistance against novobiocin and deoxycholate. This chain is Multidrug resistance protein MdtB, found in Escherichia coli O81 (strain ED1a).